We begin with the raw amino-acid sequence, 220 residues long: SAGA-associated factor 11 homolog (220 aa).

The interval 1 to 38 is disordered; sequence MSTGTANSAVSSKSTNSTTSTSKVPVNEKSNNSQNANT. Residues 126 to 147 form an SGF11-type zinc finger; sequence CTCPNCDRPVSAARFAPHLEKC. Composition is skewed to low complexity over residues 160–177 and 204–220; these read RRLATKESNSASSSSSSS and SQNSRNNGSKKNNGKTF. The tract at residues 160–220 is disordered; the sequence is RRLATKESNS…GSKKNNGKTF (61 aa).

Belongs to the SGF11 family. As to quaternary structure, component of some SAGA transcription coactivator-HAT complexes. Within the SAGA complex, participates in a subcomplex of SAGA called the DUB module (deubiquitination module).

The protein resides in the nucleus. In terms of biological role, component of the transcription regulatory histone acetylation (HAT) complex SAGA, a multiprotein complex that activates transcription by remodeling chromatin and mediating histone acetylation and deubiquitination. Within the SAGA complex, participates in a subcomplex that specifically deubiquitinates histone H2B. The SAGA complex is recruited to specific gene promoters by activators, where it is required for transcription. The protein is SAGA-associated factor 11 homolog of Musca domestica (House fly).